Consider the following 223-residue polypeptide: Sigma non-opioid intracellular receptor 1 (223 aa).

Residues 1–9 (MQWAAGRRW) are Lumenal-facing. Positions 2–8 (QWAAGRR) are targeting to endoplasmic reticulum-associated lipid droplets. A helical transmembrane segment spans residues 10–30 (AWITLFLTIVAVLIQAVWLWL). Residues 31–223 (GTQSFVFQRE…LTTYLFGQDS (193 aa)) lie on the Cytoplasmic side of the membrane. The tract at residues 99-106 (SLSEYVLL) is important for ligand-binding. The segment at 177-223 (VIPSTLAFALSDTIFSTQDFLTLFYTLRAYARGLRLELTTYLFGQDS) is C-terminal hydrophobic region.

The protein belongs to the ERG2 family. As to quaternary structure, homotrimer. Forms a ternary complex with ANK2 and ITPR3. The complex is disrupted by agonists. Interacts with KCNA4. Interacts with KCNA2; cocaine consumption leads to increased interaction. Interacts with RNF112 in an oxidative stress-regulated manner.

Its subcellular location is the nucleus inner membrane. The protein resides in the nucleus outer membrane. It localises to the nucleus envelope. The protein localises to the cytoplasmic vesicle. It is found in the endoplasmic reticulum membrane. Its subcellular location is the membrane. The protein resides in the lipid droplet. It localises to the cell junction. The protein localises to the cell membrane. It is found in the cell projection. Its subcellular location is the growth cone. The protein resides in the postsynaptic density membrane. In terms of biological role, functions in lipid transport from the endoplasmic reticulum and is involved in a wide array of cellular functions probably through regulation of the biogenesis of lipid microdomains at the plasma membrane. Involved in the regulation of different receptors it plays a role in BDNF signaling and EGF signaling. Also regulates ion channels like the potassium channel and could modulate neurotransmitter release. Plays a role in calcium signaling through modulation together with ANK2 of the ITP3R-dependent calcium efflux at the endoplasmic reticulum. Plays a role in several other cell functions including proliferation, survival and death. Originally identified for its ability to bind various psychoactive drugs it is involved in learning processes, memory and mood alteration. Necessary for proper mitochondrial axonal transport in motor neurons, in particular the retrograde movement of mitochondria. Plays a role in protecting cells against oxidative stress-induced cell death via its interaction with RNF112. This Trichosurus vulpecula (Brush-tailed possum) protein is Sigma non-opioid intracellular receptor 1 (SIGMAR1).